The sequence spans 1096 residues: Serine/threonine-protein kinase mig-15 (1096 aa).

The region spanning 21 to 288 (FELIEVVGNG…TGALLRHPFI (268 aa)) is the Protein kinase domain. ATP is bound by residues 27–35 (VGNGTYGQV) and K50. D151 acts as the Proton acceptor in catalysis. Over residues 293–315 (HEQTIRHSIKEHIDRNRRVKKDD) the composition is skewed to basic and acidic residues. Disordered stretches follow at residues 293-351 (HEQT…MIPM), 380-492 (LPQQ…QQSR), 517-545 (KMGG…EASI), and 574-664 (NGEG…DLLP). The span at 316–328 (ADYEYSGSEDDEP) shows a compositional bias: acidic residues. Residues 380 to 393 (LPQQPAPAPFQYQQ) show a composition bias toward low complexity. Composition is skewed to basic and acidic residues over residues 397–408 (VEPRRESSEVKL) and 453–472 (NYEK…ERQA). Over residues 532 to 541 (SPPPPAPPPR) the composition is skewed to pro residues. Residues 629-642 (LDDDDSDSDNEEGN) show a composition bias toward acidic residues. One can recognise a CNH domain in the interval 778–1070 (SGEILCAALW…KFLCERNDKV (293 aa)).

The protein belongs to the protein kinase superfamily. STE Ser/Thr protein kinase family. STE20 subfamily.

It carries out the reaction L-seryl-[protein] + ATP = O-phospho-L-seryl-[protein] + ADP + H(+). The enzyme catalyses L-threonyl-[protein] + ATP = O-phospho-L-threonyl-[protein] + ADP + H(+). Its function is as follows. Involved in cell migration and signal transduction. Important in several developmental processes including epidermal development, Q neuroblast migrations and muscle arm targeting. Required with ina-1/pat-3 to stabilize the commissural axons growth cone along a precise direction and are required for the cell to respond appropriately when signaling in the growth cone must change. During gonad morphogenesis, involved in distal tip cell (DTC) migration from the dorsal side of the hermaphrodite body to the midbody to allow for formation of gonad arms. This is Serine/threonine-protein kinase mig-15 (mig-15) from Caenorhabditis elegans.